A 1588-amino-acid chain; its full sequence is Pentafunctional AROM polypeptide (1588 aa).

A 3-dehydroquinate synthase region spans residues 1–392 (MVQLAKVPIL…YGDSAQFVSD (392 aa)). NAD(+) is bound by residues 43–45 (DTN), 78–81 (ETSK), 109–111 (GGV), and Asp114. Arg125 contacts 7-phospho-2-dehydro-3-deoxy-D-arabino-heptonate. 134–135 (TS) provides a ligand contact to NAD(+). Asp141 and Lys147 together coordinate 7-phospho-2-dehydro-3-deoxy-D-arabino-heptonate. Lys156 contacts NAD(+). 7-phospho-2-dehydro-3-deoxy-D-arabino-heptonate is bound at residue Asn157. NAD(+) is bound by residues 174–177 (WLET) and Asn185. Glu189 provides a ligand contact to Zn(2+). 7-phospho-2-dehydro-3-deoxy-D-arabino-heptonate is bound by residues 189-192 (EVIK) and Lys258. Catalysis depends on Glu268, which acts as the Proton acceptor; for 3-dehydroquinate synthase activity. 7-phospho-2-dehydro-3-deoxy-D-arabino-heptonate is bound by residues 272–276 (RNLLN) and His279. Residue His279 participates in Zn(2+) binding. Residue His283 is the Proton acceptor; for 3-dehydroquinate synthase activity of the active site. Residues His295 and Lys364 each contribute to the 7-phospho-2-dehydro-3-deoxy-D-arabino-heptonate site. Position 295 (His295) interacts with Zn(2+). Residues 405 to 871 (VYPFKDIPAD…WDVLHSELGA (467 aa)) form an EPSP synthase region. The For EPSP synthase activity role is filled by Cys853. Residues 890 to 1080 (SVVIIGMRAA…IPSGRSAFVC (191 aa)) are shikimate kinase. An ATP-binding site is contributed by 895–902 (GMRAAGKT). The 3-dehydroquinase stretch occupies residues 1081 to 1293 (LTFDDLTEQT…AAPGQLTVAQ (213 aa)). His1198 (proton acceptor; for 3-dehydroquinate dehydratase activity) is an active-site residue. Catalysis depends on Lys1227, which acts as the Schiff-base intermediate with substrate; for 3-dehydroquinate dehydratase activity. The tract at residues 1306 to 1588 (PKELFVVGKP…KAIFDAVTKE (283 aa)) is shikimate dehydrogenase.

In the N-terminal section; belongs to the sugar phosphate cyclases superfamily. Dehydroquinate synthase family. It in the 2nd section; belongs to the EPSP synthase family. The protein in the 3rd section; belongs to the shikimate kinase family. This sequence in the 4th section; belongs to the type-I 3-dehydroquinase family. In the C-terminal section; belongs to the shikimate dehydrogenase family. In terms of assembly, homodimer. The cofactor is Zn(2+).

The protein localises to the cytoplasm. The catalysed reaction is 7-phospho-2-dehydro-3-deoxy-D-arabino-heptonate = 3-dehydroquinate + phosphate. It carries out the reaction 3-dehydroquinate = 3-dehydroshikimate + H2O. The enzyme catalyses shikimate + NADP(+) = 3-dehydroshikimate + NADPH + H(+). It catalyses the reaction shikimate + ATP = 3-phosphoshikimate + ADP + H(+). The catalysed reaction is 3-phosphoshikimate + phosphoenolpyruvate = 5-O-(1-carboxyvinyl)-3-phosphoshikimate + phosphate. It participates in metabolic intermediate biosynthesis; chorismate biosynthesis; chorismate from D-erythrose 4-phosphate and phosphoenolpyruvate: step 2/7. It functions in the pathway metabolic intermediate biosynthesis; chorismate biosynthesis; chorismate from D-erythrose 4-phosphate and phosphoenolpyruvate: step 3/7. The protein operates within metabolic intermediate biosynthesis; chorismate biosynthesis; chorismate from D-erythrose 4-phosphate and phosphoenolpyruvate: step 4/7. Its pathway is metabolic intermediate biosynthesis; chorismate biosynthesis; chorismate from D-erythrose 4-phosphate and phosphoenolpyruvate: step 5/7. It participates in metabolic intermediate biosynthesis; chorismate biosynthesis; chorismate from D-erythrose 4-phosphate and phosphoenolpyruvate: step 6/7. Functionally, the AROM polypeptide catalyzes 5 consecutive enzymatic reactions in prechorismate polyaromatic amino acid biosynthesis. The polypeptide is Pentafunctional AROM polypeptide (Saccharomyces cerevisiae (strain YJM789) (Baker's yeast)).